The chain runs to 146 residues: Hemoglobin subunit beta-2 (146 aa).

One can recognise a Globin domain in the interval 2–146 (HWTAEEKQLI…VAHALARRYH (145 aa)). Heme b contacts are provided by H63 and H92.

Belongs to the globin family. As to quaternary structure, heterotetramer of two alpha chains and two beta chains. In terms of tissue distribution, red blood cells.

In terms of biological role, involved in oxygen transport from the lung to the various peripheral tissues. This is Hemoglobin subunit beta-2 from Iguana iguana (Common iguana).